The chain runs to 158 residues: MQGRLSAWLVKHGLVHRSLGFDYQGIETLQIKPEDWHSIAVILYVYGYNYLRSQCAYDVAPGGLLASVYHLTRIEYGVDQPEEVCIKVFASRRNPRIPSVFWVWKSADFQERESYDMLGISYDNHPRLKRILMPESWIGWPLRKDYIAPNFYEIQDAH.

The protein belongs to the complex I 30 kDa subunit family. In terms of assembly, NDH is composed of at least 16 different subunits, 5 of which are encoded in the nucleus.

Its subcellular location is the plastid. The protein localises to the chloroplast thylakoid membrane. The enzyme catalyses a plastoquinone + NADH + (n+1) H(+)(in) = a plastoquinol + NAD(+) + n H(+)(out). It catalyses the reaction a plastoquinone + NADPH + (n+1) H(+)(in) = a plastoquinol + NADP(+) + n H(+)(out). Functionally, NDH shuttles electrons from NAD(P)H:plastoquinone, via FMN and iron-sulfur (Fe-S) centers, to quinones in the photosynthetic chain and possibly in a chloroplast respiratory chain. The immediate electron acceptor for the enzyme in this species is believed to be plastoquinone. Couples the redox reaction to proton translocation, and thus conserves the redox energy in a proton gradient. The chain is NAD(P)H-quinone oxidoreductase subunit J, chloroplastic from Vitis vinifera (Grape).